The following is a 502-amino-acid chain: MESTHALQPAEALETMRSQTVLVAGAGVAGRGVISMLCALGARLVLVADDNAQALGHIADDGDTELRLLSVSDAIDTLEELAPQLVVTSPGWKPESPLLARAAELNIPVIGDIAAAWLADQAGAFGQPRTWLAVTGTNGKTTTTAMLTSMLIADGRAALAVGNIGIAPSAALAAQHRGEPRSDVFVAEVSSFQLHWAPMFKPTVGCILNLAEDHLDWHGSYENYCADKAQVLTAEESVLALDDDDVLTTARAREVVARRGYTIHDPEEVASQNTERVVGVRDGRLVEVVIGDPSQTTDLAPAQGISPPGPAGLADAAASAAMARALGVAPGAIEAALAGFKVQAHRGQVVLEHGGVTWIDNSKATNPHAAEAALRGQRNVIWVAGGQLKGAAVDGLIRAIGGALKAVVALGVDRAELVAEVSRQLPDLPVTVIDATDPEEAMRAVARAAHGLAQPGDSVVLAPAAASLDMYTGMSQRGDLFAQYAVAYAGADRADERTQERG.

Position 136–142 (136–142 (GTNGKTT)) interacts with ATP.

This sequence belongs to the MurCDEF family.

It localises to the cytoplasm. The enzyme catalyses UDP-N-acetyl-alpha-D-muramoyl-L-alanine + D-glutamate + ATP = UDP-N-acetyl-alpha-D-muramoyl-L-alanyl-D-glutamate + ADP + phosphate + H(+). Its pathway is cell wall biogenesis; peptidoglycan biosynthesis. In terms of biological role, cell wall formation. Catalyzes the addition of glutamate to the nucleotide precursor UDP-N-acetylmuramoyl-L-alanine (UMA). The polypeptide is UDP-N-acetylmuramoylalanine--D-glutamate ligase (Corynebacterium jeikeium (strain K411)).